The sequence spans 322 residues: 2-methylene-furan-3-one reductase (322 aa).

Residues Lys59, 174–175 (GV), 197–200 (STKK), Tyr215, Ile253, 264–266 (FVL), and 311–312 (RA) contribute to the NADP(+) site. Lys59 provides a ligand contact to substrate.

The protein belongs to the zinc-containing alcohol dehydrogenase family. Quinone oxidoreductase subfamily. As to quaternary structure, monomer.

It catalyses the reaction 4-hydroxy-2,5-dimethyl-furan-3(2H)-one + NADP(+) = 4-hydroxy-5-methyl-2-methylenefuran-3(2H)-one + NADPH + H(+). Enone oxidoreductase involved in the biosynthesis of 4-hydroxy-2,5-dimethyl-3(2H)-furanone (HDMF or furaneol), the key flavor compound in strawberries. The protein is 2-methylene-furan-3-one reductase (EO) of Fragaria vesca (Woodland strawberry).